The primary structure comprises 329 residues: Delta-aminolevulinic acid dehydratase (329 aa).

Lys202 functions as the Schiff-base intermediate with substrate in the catalytic mechanism. Arg212 and Arg223 together coordinate 5-aminolevulinate. Glu239 serves as a coordination point for Mg(2+). The active-site Schiff-base intermediate with substrate is the Lys254. Ser280 and Tyr319 together coordinate 5-aminolevulinate.

This sequence belongs to the ALAD family. Homooctamer.

It catalyses the reaction 2 5-aminolevulinate = porphobilinogen + 2 H2O + H(+). The protein operates within porphyrin-containing compound metabolism; protoporphyrin-IX biosynthesis; coproporphyrinogen-III from 5-aminolevulinate: step 1/4. Functionally, catalyzes an early step in the biosynthesis of tetrapyrroles. Binds two molecules of 5-aminolevulinate per subunit, each at a distinct site, and catalyzes their condensation to form porphobilinogen. The polypeptide is Delta-aminolevulinic acid dehydratase (hemB) (Mycobacterium tuberculosis (strain CDC 1551 / Oshkosh)).